Consider the following 234-residue polypeptide: 2,3-bisphosphoglycerate-dependent phosphoglycerate mutase (234 aa).

Residues 8–15, 21–22, Arg-60, 87–90, Lys-98, 114–115, and 183–184 contribute to the substrate site; these read RHGESVWN, TG, ERHY, RR, and GN. Catalysis depends on His-9, which acts as the Tele-phosphohistidine intermediate. Glu-87 serves as the catalytic Proton donor/acceptor.

It belongs to the phosphoglycerate mutase family. BPG-dependent PGAM subfamily. Homodimer.

The enzyme catalyses (2R)-2-phosphoglycerate = (2R)-3-phosphoglycerate. The protein operates within carbohydrate degradation; glycolysis; pyruvate from D-glyceraldehyde 3-phosphate: step 3/5. Catalyzes the interconversion of 2-phosphoglycerate and 3-phosphoglycerate. The sequence is that of 2,3-bisphosphoglycerate-dependent phosphoglycerate mutase from Citrifermentans bemidjiense (strain ATCC BAA-1014 / DSM 16622 / JCM 12645 / Bem) (Geobacter bemidjiensis).